The sequence spans 242 residues: UDP-2,3-diacylglucosamine hydrolase (242 aa).

Residues D9, H11, D42, N79, and H114 each contribute to the Mn(2+) site. 79 to 80 (NR) provides a ligand contact to substrate. Residues D122, S160, N164, K167, and H195 each coordinate substrate. The Mn(2+) site is built by H195 and H197.

It belongs to the LpxH family. It depends on Mn(2+) as a cofactor.

The protein localises to the cell inner membrane. The enzyme catalyses UDP-2-N,3-O-bis[(3R)-3-hydroxytetradecanoyl]-alpha-D-glucosamine + H2O = 2-N,3-O-bis[(3R)-3-hydroxytetradecanoyl]-alpha-D-glucosaminyl 1-phosphate + UMP + 2 H(+). It functions in the pathway glycolipid biosynthesis; lipid IV(A) biosynthesis; lipid IV(A) from (3R)-3-hydroxytetradecanoyl-[acyl-carrier-protein] and UDP-N-acetyl-alpha-D-glucosamine: step 4/6. Functionally, hydrolyzes the pyrophosphate bond of UDP-2,3-diacylglucosamine to yield 2,3-diacylglucosamine 1-phosphate (lipid X) and UMP by catalyzing the attack of water at the alpha-P atom. Involved in the biosynthesis of lipid A, a phosphorylated glycolipid that anchors the lipopolysaccharide to the outer membrane of the cell. The protein is UDP-2,3-diacylglucosamine hydrolase of Shewanella loihica (strain ATCC BAA-1088 / PV-4).